The primary structure comprises 284 residues: D-tagatose-1,6-bisphosphate aldolase subunit GatY (284 aa).

D82 functions as the Proton donor in the catalytic mechanism. Zn(2+) contacts are provided by H83 and H180. A dihydroxyacetone phosphate-binding site is contributed by G181. H208 is a binding site for Zn(2+). Residues 209–211 and 230–233 each bind dihydroxyacetone phosphate; these read GAS and NVAT.

Belongs to the class II fructose-bisphosphate aldolase family. TagBP aldolase GatY subfamily. As to quaternary structure, forms a complex with GatZ. It depends on Zn(2+) as a cofactor.

The catalysed reaction is D-tagatofuranose 1,6-bisphosphate = D-glyceraldehyde 3-phosphate + dihydroxyacetone phosphate. It functions in the pathway carbohydrate metabolism; D-tagatose 6-phosphate degradation; D-glyceraldehyde 3-phosphate and glycerone phosphate from D-tagatose 6-phosphate: step 2/2. Functionally, catalytic subunit of the tagatose-1,6-bisphosphate aldolase GatYZ, which catalyzes the reversible aldol condensation of dihydroxyacetone phosphate (DHAP or glycerone-phosphate) with glyceraldehyde 3-phosphate (G3P) to produce tagatose 1,6-bisphosphate (TBP). Requires GatZ subunit for full activity and stability. Is involved in the catabolism of galactitol. This Salmonella paratyphi B (strain ATCC BAA-1250 / SPB7) protein is D-tagatose-1,6-bisphosphate aldolase subunit GatY.